The primary structure comprises 149 residues: Large ribosomal subunit protein uL22c (149 aa).

It belongs to the universal ribosomal protein uL22 family. As to quaternary structure, part of the 50S ribosomal subunit.

The protein localises to the plastid. Its subcellular location is the chloroplast. This protein binds specifically to 23S rRNA. Functionally, the globular domain of the protein is located near the polypeptide exit tunnel on the outside of the subunit, while an extended beta-hairpin is found that lines the wall of the exit tunnel in the center of the 70S ribosome. The polypeptide is Large ribosomal subunit protein uL22c (rpl22-A) (Pelargonium hortorum (Common geranium)).